The following is a 196-amino-acid chain: GTP cyclohydrolase 1 (196 aa).

Cys-84, His-87, and Cys-157 together coordinate Zn(2+).

It belongs to the GTP cyclohydrolase I family. As to quaternary structure, toroid-shaped homodecamer, composed of two pentamers of five dimers.

It catalyses the reaction GTP + H2O = 7,8-dihydroneopterin 3'-triphosphate + formate + H(+). The protein operates within cofactor biosynthesis; 7,8-dihydroneopterin triphosphate biosynthesis; 7,8-dihydroneopterin triphosphate from GTP: step 1/1. This chain is GTP cyclohydrolase 1, found in Corynebacterium glutamicum (strain R).